The primary structure comprises 416 residues: UDP-N-acetylglucosamine 1-carboxyvinyltransferase (416 aa).

22–23 serves as a coordination point for phosphoenolpyruvate; it reads KN. Residue Arg-92 coordinates UDP-N-acetyl-alpha-D-glucosamine. The active-site Proton donor is Cys-116. A 2-(S-cysteinyl)pyruvic acid O-phosphothioketal modification is found at Cys-116. UDP-N-acetyl-alpha-D-glucosamine-binding positions include 121 to 125, Asp-304, and Ile-326; that span reads RPVDQ.

It belongs to the EPSP synthase family. MurA subfamily.

The protein localises to the cytoplasm. It carries out the reaction phosphoenolpyruvate + UDP-N-acetyl-alpha-D-glucosamine = UDP-N-acetyl-3-O-(1-carboxyvinyl)-alpha-D-glucosamine + phosphate. The protein operates within cell wall biogenesis; peptidoglycan biosynthesis. Its function is as follows. Cell wall formation. Adds enolpyruvyl to UDP-N-acetylglucosamine. This is UDP-N-acetylglucosamine 1-carboxyvinyltransferase from Janthinobacterium sp. (strain Marseille) (Minibacterium massiliensis).